We begin with the raw amino-acid sequence, 371 residues long: Queuine tRNA-ribosyltransferase (371 aa).

The Proton acceptor role is filled by D90. Substrate-binding positions include 90 to 94 (DSGGF), D144, Q188, and G215. Residues 246 to 252 (GVGTPED) are RNA binding. D265 functions as the Nucleophile in the catalytic mechanism. Residues 270-274 (TRNAR) are RNA binding; important for wobble base 34 recognition. Positions 303, 305, 308, and 334 each coordinate Zn(2+).

Belongs to the queuine tRNA-ribosyltransferase family. As to quaternary structure, homodimer. Within each dimer, one monomer is responsible for RNA recognition and catalysis, while the other monomer binds to the replacement base PreQ1. Requires Zn(2+) as cofactor.

The enzyme catalyses 7-aminomethyl-7-carbaguanine + guanosine(34) in tRNA = 7-aminomethyl-7-carbaguanosine(34) in tRNA + guanine. It participates in tRNA modification; tRNA-queuosine biosynthesis. Its function is as follows. Catalyzes the base-exchange of a guanine (G) residue with the queuine precursor 7-aminomethyl-7-deazaguanine (PreQ1) at position 34 (anticodon wobble position) in tRNAs with GU(N) anticodons (tRNA-Asp, -Asn, -His and -Tyr). Catalysis occurs through a double-displacement mechanism. The nucleophile active site attacks the C1' of nucleotide 34 to detach the guanine base from the RNA, forming a covalent enzyme-RNA intermediate. The proton acceptor active site deprotonates the incoming PreQ1, allowing a nucleophilic attack on the C1' of the ribose to form the product. After dissociation, two additional enzymatic reactions on the tRNA convert PreQ1 to queuine (Q), resulting in the hypermodified nucleoside queuosine (7-(((4,5-cis-dihydroxy-2-cyclopenten-1-yl)amino)methyl)-7-deazaguanosine). The sequence is that of Queuine tRNA-ribosyltransferase from Neisseria meningitidis serogroup B (strain ATCC BAA-335 / MC58).